The sequence spans 823 residues: Translation initiation factor IF-2 (823 aa).

Disordered regions lie at residues 30–66 (VPPSLARGTSTGKSFTTVEVRSKKRRPGEYISHDDKR) and 156–192 (TPSHSNKSGHDDRGGKKYAHGATGRHKEKEGVSIKKV). Over residues 36 to 48 (RGTSTGKSFTTVE) the composition is skewed to polar residues. Residues 56–66 (PGEYISHDDKR) show a composition bias toward basic and acidic residues. The tr-type G domain occupies 322–491 (PRPPVVTVMG…LLLAEMLELS (170 aa)). Residues 331-338 (GHVDHGKT) form a G1 region. 331–338 (GHVDHGKT) provides a ligand contact to GTP. The tract at residues 356-360 (GITQH) is G2. The segment at 377–380 (DTPG) is G3. GTP-binding positions include 377-381 (DTPGH) and 431-434 (NKID). Positions 431–434 (NKID) are G4. The tract at residues 467–469 (SAK) is G5.

The protein belongs to the TRAFAC class translation factor GTPase superfamily. Classic translation factor GTPase family. IF-2 subfamily.

The protein localises to the cytoplasm. One of the essential components for the initiation of protein synthesis. Protects formylmethionyl-tRNA from spontaneous hydrolysis and promotes its binding to the 30S ribosomal subunits. Also involved in the hydrolysis of GTP during the formation of the 70S ribosomal complex. This is Translation initiation factor IF-2 from Anaplasma phagocytophilum (strain HZ).